A 275-amino-acid polypeptide reads, in one-letter code: Ribosomal RNA small subunit methyltransferase A (275 aa).

Residues Asn19, Leu21, Gly46, Glu71, Asp94, and Asn117 each coordinate S-adenosyl-L-methionine.

Belongs to the class I-like SAM-binding methyltransferase superfamily. rRNA adenine N(6)-methyltransferase family. RsmA subfamily.

It is found in the cytoplasm. It carries out the reaction adenosine(1518)/adenosine(1519) in 16S rRNA + 4 S-adenosyl-L-methionine = N(6)-dimethyladenosine(1518)/N(6)-dimethyladenosine(1519) in 16S rRNA + 4 S-adenosyl-L-homocysteine + 4 H(+). In terms of biological role, specifically dimethylates two adjacent adenosines (A1518 and A1519) in the loop of a conserved hairpin near the 3'-end of 16S rRNA in the 30S particle. May play a critical role in biogenesis of 30S subunits. This chain is Ribosomal RNA small subunit methyltransferase A, found in Burkholderia orbicola (strain MC0-3).